The following is a 736-amino-acid chain: Phosphoribosylformylglycinamidine synthase subunit PurL (736 aa).

H49 is a catalytic residue. 2 residues coordinate ATP: Y52 and K91. Residue E93 coordinates Mg(2+). Residues 94-97 and R116 each bind substrate; that span reads SHNH. H95 acts as the Proton acceptor in catalysis. Mg(2+) is bound at residue D117. Q240 contributes to the substrate binding site. D268 serves as a coordination point for Mg(2+). 312–314 contributes to the substrate binding site; the sequence is ESQ. 2 residues coordinate ATP: D493 and G530. N531 contacts Mg(2+). S533 lines the substrate pocket.

This sequence belongs to the FGAMS family. In terms of assembly, monomer. Part of the FGAM synthase complex composed of 1 PurL, 1 PurQ and 2 PurS subunits.

The protein localises to the cytoplasm. The enzyme catalyses N(2)-formyl-N(1)-(5-phospho-beta-D-ribosyl)glycinamide + L-glutamine + ATP + H2O = 2-formamido-N(1)-(5-O-phospho-beta-D-ribosyl)acetamidine + L-glutamate + ADP + phosphate + H(+). It participates in purine metabolism; IMP biosynthesis via de novo pathway; 5-amino-1-(5-phospho-D-ribosyl)imidazole from N(2)-formyl-N(1)-(5-phospho-D-ribosyl)glycinamide: step 1/2. In terms of biological role, part of the phosphoribosylformylglycinamidine synthase complex involved in the purines biosynthetic pathway. Catalyzes the ATP-dependent conversion of formylglycinamide ribonucleotide (FGAR) and glutamine to yield formylglycinamidine ribonucleotide (FGAM) and glutamate. The FGAM synthase complex is composed of three subunits. PurQ produces an ammonia molecule by converting glutamine to glutamate. PurL transfers the ammonia molecule to FGAR to form FGAM in an ATP-dependent manner. PurS interacts with PurQ and PurL and is thought to assist in the transfer of the ammonia molecule from PurQ to PurL. This chain is Phosphoribosylformylglycinamidine synthase subunit PurL, found in Rhodopseudomonas palustris (strain BisB18).